We begin with the raw amino-acid sequence, 452 residues long: Histone acetyltransferase type B subunit 2 (452 aa).

WD repeat units follow at residues 155–195 (YEDG…NSKE), 205–245 (HHTK…SDGS), 256–296 (HHDA…NKAA), 300–340 (KESR…TPIS), 344–384 (SHCD…DDLS), and 401–441 (GHSS…SNDE).

The protein belongs to the WD repeat RBAP46/RBAP48/MSI1 family. Component of the HAT-B complex composed of at least HAT1 and HAT2. The HAT-B complex binds to histone H4 tail.

It is found in the cytoplasm. Its subcellular location is the nucleus. In terms of biological role, regulatory subunit of the histone acetylase B (HAT-B) complex. The complex acetylates 'Lys-12' of histone H4 which is required for telomeric silencing. The polypeptide is Histone acetyltransferase type B subunit 2 (HAT2) (Yarrowia lipolytica (strain CLIB 122 / E 150) (Yeast)).